The chain runs to 590 residues: Sperm-associated microtubule inner protein 4 (590 aa).

Thr219 bears the Phosphothreonine mark. Residues Ser407 and Ser422 each carry the phosphoserine modification. A Glycyl lysine isopeptide (Lys-Gly) (interchain with G-Cter in SUMO2) cross-link involves residue Lys427. Phosphotyrosine is present on Tyr442. Position 485 is a phosphoserine (Ser485). Lys545 participates in a covalent cross-link: Glycyl lysine isopeptide (Lys-Gly) (interchain with G-Cter in SUMO2). A Phosphoserine modification is found at Ser547.

In terms of tissue distribution, predominantly expressed in the testes.

It localises to the cytoplasm. The protein localises to the cytoskeleton. The protein resides in the microtubule organizing center. It is found in the centrosome. Its subcellular location is the flagellum axoneme. Microtubule inner protein (MIP) part of the dynein-decorated doublet microtubules (DMTs) in flagellum axoneme. May serve to reinforce and thus stabilize the microtubule structure in the sperm flagella. The polypeptide is Sperm-associated microtubule inner protein 4 (Homo sapiens (Human)).